The chain runs to 334 residues: Protein-methionine-sulfoxide reductase catalytic subunit MsrP (334 aa).

Residues 1–44 (MKKNQFLKESDVTAESVFFMKRRQVLKALGISAAALSLPHAAHA) constitute a signal peptide (tat-type signal). Mo-molybdopterin-binding positions include Asn88, 91–92 (YE), Cys146, Thr181, Asn233, Arg238, and 249–251 (GIK).

This sequence belongs to the MsrP family. Heterodimer of a catalytic subunit (MsrP) and a heme-binding subunit (MsrQ). The cofactor is Mo-molybdopterin. Post-translationally, predicted to be exported by the Tat system. The position of the signal peptide cleavage has not been experimentally proven.

The protein localises to the periplasm. It catalyses the reaction L-methionyl-[protein] + a quinone + H2O = L-methionyl-(S)-S-oxide-[protein] + a quinol. The enzyme catalyses L-methionyl-[protein] + a quinone + H2O = L-methionyl-(R)-S-oxide-[protein] + a quinol. Functionally, part of the MsrPQ system that repairs oxidized periplasmic proteins containing methionine sulfoxide residues (Met-O), using respiratory chain electrons. Thus protects these proteins from oxidative-stress damage caused by reactive species of oxygen and chlorine generated by the host defense mechanisms. MsrPQ is essential for the maintenance of envelope integrity under bleach stress, rescuing a wide series of structurally unrelated periplasmic proteins from methionine oxidation, including the primary periplasmic chaperone SurA and the lipoprotein Pal. The catalytic subunit MsrP is non-stereospecific, being able to reduce both (R-) and (S-) diastereoisomers of methionine sulfoxide. The chain is Protein-methionine-sulfoxide reductase catalytic subunit MsrP from Escherichia coli O9:H4 (strain HS).